The chain runs to 277 residues: Digeranylgeranylglyceryl phosphate synthase (277 aa).

The next 8 helical transmembrane spans lie at 16–36 (ILAG…IPPV), 40–60 (ILIF…NDYF), 93–113 (FIGL…ALGA), 129–149 (FIGN…GAVG), 153–173 (IDLA…REIM), 199–218 (SGII…FLPV), 222–244 (IGLG…IDVL), and 253–273 (GQKI…LGAL).

Belongs to the UbiA prenyltransferase family. DGGGP synthase subfamily. The cofactor is Mg(2+).

It localises to the cell membrane. It catalyses the reaction sn-3-O-(geranylgeranyl)glycerol 1-phosphate + (2E,6E,10E)-geranylgeranyl diphosphate = 2,3-bis-O-(geranylgeranyl)-sn-glycerol 1-phosphate + diphosphate. It functions in the pathway membrane lipid metabolism; glycerophospholipid metabolism. Its function is as follows. Prenyltransferase that catalyzes the transfer of the geranylgeranyl moiety of geranylgeranyl diphosphate (GGPP) to the C2 hydroxyl of (S)-3-O-geranylgeranylglyceryl phosphate (GGGP). This reaction is the second ether-bond-formation step in the biosynthesis of archaeal membrane lipids. This Pyrococcus horikoshii (strain ATCC 700860 / DSM 12428 / JCM 9974 / NBRC 100139 / OT-3) protein is Digeranylgeranylglyceryl phosphate synthase.